Here is a 23-residue protein sequence, read N- to C-terminus: Phospholipase A1 verutoxin-1 (23 aa).

Belongs to the AB hydrolase superfamily. Lipase family. Contains six disulfide bonds. Expressed by the venom gland.

It is found in the secreted. It carries out the reaction a 1,2-diacyl-sn-glycero-3-phosphocholine + H2O = a 2-acyl-sn-glycero-3-phosphocholine + a fatty acid + H(+). The enzyme catalyses 1-(9Z-octadecenoyl)-2-hexadecanoyl-sn-glycero-3-phosphocholine + H2O = 2-hexadecanoyl-sn-glycero-3-phosphocholine + (9Z)-octadecenoate + H(+). It catalyses the reaction a 1-acyl-sn-glycero-3-phosphocholine + H2O = sn-glycerol 3-phosphocholine + a fatty acid + H(+). The protein operates within phospholipid metabolism. Activity is maximal in the presence of calcium. However, unlike phospholipases A2 whose catalytic activity is strictly calcium-dependent, this enzyme shows considerable catalytic activity on phosphatidylcholine emulsified in calcium free solution; the catalytic activity of VT-1 assayed in the absence of calcium ions is 18-20% of that assayed in solution containing calcium ions. Its function is as follows. Catalyzes the hydrolysis of glycerophospholipids such as phosphatidylcholine (1,2-diacyl-sn-glycero-3-phosphocholine) and has a moderate activity to hydrolyze lysoglycerophospholipids such as lysophosphatidylcholine (1-acyl-sn-glycero-3-phosphocholine), but is unable to hydrolyze sphingomyelin. Liberates the fatty acid from the sn-1 position of 1,2-diacyl-sn-glycero-3-phosphocholine mainly, indicating phospholipase activity of the A1 type. In addition to acting as an allergen, it possesses a moderate hemolytic activity on red blood cells of mice (3% of hemolysis at 3.0 ug/ml). This is Phospholipase A1 verutoxin-1 from Vespa velutina (Asian yellow-legged hornet).